A 66-amino-acid polypeptide reads, in one-letter code: Beta-toxin Cbo3 (66 aa).

The 66-residue stretch at 1–66 folds into the LCN-type CS-alpha/beta domain; sequence KEGYIVNYHD…VWPLPKKTCN (66 aa). Cystine bridges form between cysteine 12–cysteine 65, cysteine 16–cysteine 41, cysteine 25–cysteine 46, and cysteine 29–cysteine 48. Asparagine 66 carries the post-translational modification Asparagine amide.

The protein belongs to the long (4 C-C) scorpion toxin superfamily. Sodium channel inhibitor family. Beta subfamily. Expressed by the venom gland.

It localises to the secreted. Functionally, beta toxins bind voltage-independently at site-4 of sodium channels and shift the voltage of activation toward more negative potentials thereby affecting sodium channel activation and promoting spontaneous and repetitive firing. A mixture of Cbo2 and Cbo3 is weakly active on the human voltage-gated sodium channels Nav1.4/SCN4A and Nav1.6/SCN8A when tested at 200 nM. In vivo, is toxic to mice when intraperitoneally injected. This is Beta-toxin Cbo3 from Centruroides bonito (Scorpion).